A 294-amino-acid chain; its full sequence is ATP synthase gamma chain (294 aa).

It belongs to the ATPase gamma chain family. F-type ATPases have 2 components, CF(1) - the catalytic core - and CF(0) - the membrane proton channel. CF(1) has five subunits: alpha(3), beta(3), gamma(1), delta(1), epsilon(1). CF(0) has three main subunits: a, b and c.

The protein resides in the cell inner membrane. Its function is as follows. Produces ATP from ADP in the presence of a proton gradient across the membrane. The gamma chain is believed to be important in regulating ATPase activity and the flow of protons through the CF(0) complex. The protein is ATP synthase gamma chain of Nitratiruptor sp. (strain SB155-2).